We begin with the raw amino-acid sequence, 466 residues long: 3-isopropylmalate dehydratase large subunit (466 aa).

[4Fe-4S] cluster contacts are provided by Cys-347, Cys-407, and Cys-410.

It belongs to the aconitase/IPM isomerase family. LeuC type 1 subfamily. Heterodimer of LeuC and LeuD. The cofactor is [4Fe-4S] cluster.

The enzyme catalyses (2R,3S)-3-isopropylmalate = (2S)-2-isopropylmalate. Its pathway is amino-acid biosynthesis; L-leucine biosynthesis; L-leucine from 3-methyl-2-oxobutanoate: step 2/4. Functionally, catalyzes the isomerization between 2-isopropylmalate and 3-isopropylmalate, via the formation of 2-isopropylmaleate. This Escherichia coli O45:K1 (strain S88 / ExPEC) protein is 3-isopropylmalate dehydratase large subunit.